A 1477-amino-acid chain; its full sequence is Oligomycin resistance ATP-dependent permease YOR1 (1477 aa).

Positions 1-48 (MTITVGDAVSETELENKSQNVVLSPKASASSDISTDVDKDTSSSWDDK) are disordered. Residues 1–206 (MTITVGDAVS…RALLFTFKKQ (206 aa)) lie on the Cytoplasmic side of the membrane. A phosphoserine mark is found at Ser-10 and Ser-24. Residues 36 to 48 (DVDKDTSSSWDDK) show a composition bias toward basic and acidic residues. Phosphothreonine is present on Thr-53. A Diacidic ER export motif DxE motif is present at residues 71–73 (DIE). A helical membrane pass occupies residues 207–227 (YFMSIVFAILANCTSGFNPMI). The ABC transmembrane type-1 1 domain occupies 207 to 493 (YFMSIVFAIL…LPIAIGTGID (287 aa)). The Extracellular segment spans residues 228 to 249 (TKRLIEFVEEKAIFHSMHVNKG). Residues 250 to 270 (IGYAIGACLMMFVNGLTFNHF) form a helical membrane-spanning segment. The Cytoplasmic segment spans residues 271–328 (FHTSQLTGVQAKSILTKAAMKKMFNASNYARHCFPNGKVTSFVTTDLARIEFALSFQP). Residues 329–349 (FLAGFPAILAICIVLLIVNLG) form a helical membrane-spanning segment. The Extracellular segment spans residues 350–357 (PIALVGIG). The helical transmembrane segment at 358–370 (IFFGGFFISLFAF) threads the bilayer. The Cytoplasmic segment spans residues 371-433 (KLILGFRIAA…KVRKMQLSRN (63 aa)). A helical transmembrane segment spans residues 434 to 454 (FLIAMAMSLPSIASLVTFLAM). The Extracellular segment spans residues 455-478 (YKVNKGGRQPGNIFASLSLFQVLS). Residues 479–499 (LQMFFLPIAIGTGIDMIIGLG) form a helical membrane-spanning segment. The Cytoplasmic portion of the chain corresponds to 500 to 615 (RLQSLLEAPE…DLNFDIKKGE (116 aa)). The tract at residues 552–595 (KGEAKDEGKKNKKKRKDTWGKPSASTNKAKRLDNMLKDRDGPED) is disordered. Basic and acidic residues predominate over residues 581–595 (KRLDNMLKDRDGPED). One can recognise an ABC transporter 1 domain in the interval 581 to 808 (KRLDNMLKDR…NQTLINLLQF (228 aa)). Residues 616–636 (FIMITGPIGTGKSSLLNAMAG) traverse the membrane as a helical segment. Residue 621 to 628 (GPIGTGKS) participates in ATP binding. The Extracellular portion of the chain corresponds to 637–892 (SMRKTDGKVE…EYIKAAVGKW (256 aa)). Residues Asn-661, Asn-759, and Asn-799 are each glycosylated (N-linked (GlcNAc...) asparagine). A helical transmembrane segment spans residues 893 to 913 (GFIALPLYAILVVGTTFCSLF). The region spanning 897–1175 (LPLYAILVVG…ILRAMTQTEN (279 aa)) is the ABC transmembrane type-1 2 domain. Residues 914–940 (SSVWLSYWTENKFKNRPPSFYMGLYSF) are Cytoplasmic-facing. The chain crosses the membrane as a helical span at residues 941-961 (FVFAAFIFMNGQFTILCAMGI). Topologically, residues 962–1027 (MASKWLNLRA…ANIVGVCVMC (66 aa)) are extracellular. The helical transmembrane segment at 1028-1048 (IVYLPWFAIAIPFLLVIFVLI) threads the bilayer. Residues 1049 to 1117 (ADHYQSSGRE…GYLVVVLQRW (69 aa)) are Cytoplasmic-facing. Residues 1118-1138 (VGIFLDMVAIAFALIITLLCV) traverse the membrane as a helical segment. Residues 1139-1141 (TRA) lie on the Extracellular side of the membrane. Residues 1142–1162 (FPISAASVGVLLTYVLQLPGL) traverse the membrane as a helical segment. The Cytoplasmic portion of the chain corresponds to 1163-1477 (LNTILRAMTQ…IVENDFENRS (315 aa)). An ABC transporter 2 domain is found at 1213-1464 (IIFENVDFAY…EDSIFRSMCS (252 aa)). Residue 1247–1254 (GRTGAGKS) coordinates ATP.

Belongs to the ABC transporter superfamily. ABCC family. Conjugate transporter (TC 3.A.1.208) subfamily.

It localises to the cell membrane. The catalysed reaction is a 1,2-diacyl-sn-glycero-3-phosphoethanolamine(in) + ATP + H2O = a 1,2-diacyl-sn-glycero-3-phosphoethanolamine(out) + ADP + phosphate + H(+). It carries out the reaction Cd(2+)(in) + ATP + H2O = Cd(2+)(out) + ADP + phosphate + H(+). The enzyme catalyses an S-substituted glutathione(in) + ATP + H2O = an S-substituted glutathione(out) + ADP + phosphate + H(+). In terms of biological role, functions as a pleiotropic drug pump at the plasma membrane to clear toxic substances from the cytosol. Organic anion transporter involved in the detoxification of a wide range of toxic environmental organic anions that contain carboxyl groups. Required for tolerance to reveromycin A, tautomycin and leptomycin B. Required for oligomycin resistance. Required for rhodamine B resistance. Mediates the ATP-dependent efflux of rhodamine B. Involved in cadmium detoxification. Displays an energy-dependent efflux of cadmium and glutathione, suggesting that YOR1 transports both compounds as a bis-glutathionato-cadmium Cd-(GS)(2) complex. Confers resistance to rhodamine 6G and to doxorubicin. The chain is Oligomycin resistance ATP-dependent permease YOR1 from Saccharomyces cerevisiae (strain ATCC 204508 / S288c) (Baker's yeast).